Consider the following 347-residue polypeptide: NADH-ubiquinone oxidoreductase chain 2 (347 aa).

10 helical membrane passes run 1-21 (MNPS…MMVI), 25-45 (HWLL…PIMM), 59-79 (YLLT…INLM), 96-116 (TLMT…FWVP), 122-142 (IPLT…LSIL), 149-169 (INLY…GWGG), 200-220 (LTLL…MLFI), 239-259 (IITT…PLSG), 274-294 (DILI…YFYM), and 325-345 (LLPT…MLSI).

The protein belongs to the complex I subunit 2 family. Core subunit of respiratory chain NADH dehydrogenase (Complex I) which is composed of 45 different subunits. Interacts with TMEM242.

The protein resides in the mitochondrion inner membrane. The enzyme catalyses a ubiquinone + NADH + 5 H(+)(in) = a ubiquinol + NAD(+) + 4 H(+)(out). In terms of biological role, core subunit of the mitochondrial membrane respiratory chain NADH dehydrogenase (Complex I) which catalyzes electron transfer from NADH through the respiratory chain, using ubiquinone as an electron acceptor. Essential for the catalytic activity and assembly of complex I. The chain is NADH-ubiquinone oxidoreductase chain 2 from Balaenoptera musculus (Blue whale).